The following is a 267-amino-acid chain: Ubiquinone biosynthesis protein COQ4 homolog, mitochondrial (267 aa).

The Zn(2+) site is built by His170, Asp171, His174, and Glu186.

The protein belongs to the COQ4 family. As to quaternary structure, component of a multi-subunit COQ enzyme complex. The cofactor is Zn(2+).

It is found in the mitochondrion inner membrane. The enzyme catalyses a 4-hydroxy-3-methoxy-5-(all-trans-polyprenyl)benzoate + H(+) = a 2-methoxy-6-(all-trans-polyprenyl)phenol + CO2. It functions in the pathway cofactor biosynthesis; ubiquinone biosynthesis. Lyase that catalyzes the C1-decarboxylation of 4-hydroxy-3-methoxy-5-(all-trans-polyprenyl)benzoic acid into 2-methoxy-6-(all-trans-polyprenyl)phenol during ubiquinone biosynthesis. The sequence is that of Ubiquinone biosynthesis protein COQ4 homolog, mitochondrial from Drosophila pseudoobscura pseudoobscura (Fruit fly).